The sequence spans 483 residues: Aspartyl/glutamyl-tRNA(Asn/Gln) amidotransferase subunit B (483 aa).

Belongs to the GatB/GatE family. GatB subfamily. In terms of assembly, heterotrimer of A, B and C subunits.

The enzyme catalyses L-glutamyl-tRNA(Gln) + L-glutamine + ATP + H2O = L-glutaminyl-tRNA(Gln) + L-glutamate + ADP + phosphate + H(+). It carries out the reaction L-aspartyl-tRNA(Asn) + L-glutamine + ATP + H2O = L-asparaginyl-tRNA(Asn) + L-glutamate + ADP + phosphate + 2 H(+). Functionally, allows the formation of correctly charged Asn-tRNA(Asn) or Gln-tRNA(Gln) through the transamidation of misacylated Asp-tRNA(Asn) or Glu-tRNA(Gln) in organisms which lack either or both of asparaginyl-tRNA or glutaminyl-tRNA synthetases. The reaction takes place in the presence of glutamine and ATP through an activated phospho-Asp-tRNA(Asn) or phospho-Glu-tRNA(Gln). In Rickettsia typhi (strain ATCC VR-144 / Wilmington), this protein is Aspartyl/glutamyl-tRNA(Asn/Gln) amidotransferase subunit B.